The primary structure comprises 208 residues: Small ribosomal subunit protein uS4 (208 aa).

The segment at 24-52 is disordered; the sequence is GVKPFDVKTKKANKAPGQHGQARGGKQSE. The region spanning 98-160 is the S4 RNA-binding domain; that stretch reads SRLDNVVYRM…AKQQLRIKNA (63 aa).

Belongs to the universal ribosomal protein uS4 family. In terms of assembly, part of the 30S ribosomal subunit. Contacts protein S5. The interaction surface between S4 and S5 is involved in control of translational fidelity.

Functionally, one of the primary rRNA binding proteins, it binds directly to 16S rRNA where it nucleates assembly of the body of the 30S subunit. Its function is as follows. With S5 and S12 plays an important role in translational accuracy. In Acinetobacter baumannii (strain ACICU), this protein is Small ribosomal subunit protein uS4.